Here is a 142-residue protein sequence, read N- to C-terminus: Large ribosomal subunit protein uL16 (142 aa).

Belongs to the universal ribosomal protein uL16 family. In terms of assembly, part of the 50S ribosomal subunit.

Its function is as follows. Binds 23S rRNA and is also seen to make contacts with the A and possibly P site tRNAs. In Pseudothermotoga lettingae (strain ATCC BAA-301 / DSM 14385 / NBRC 107922 / TMO) (Thermotoga lettingae), this protein is Large ribosomal subunit protein uL16.